We begin with the raw amino-acid sequence, 228 residues long: Isoprenyl transferase (228 aa).

Aspartate 9 is a catalytic residue. Mg(2+) is bound at residue aspartate 9. Substrate is bound by residues 10-13 (GNGR), tryptophan 14, arginine 22, histidine 26, and 54-56 (STE). The active-site Proton acceptor is the asparagine 57. Residues tryptophan 58, arginine 60, arginine 175, and 181 to 183 (RMS) contribute to the substrate site. Residue glutamate 194 coordinates Mg(2+).

It belongs to the UPP synthase family. As to quaternary structure, homodimer. It depends on Mg(2+) as a cofactor.

Catalyzes the condensation of isopentenyl diphosphate (IPP) with allylic pyrophosphates generating different type of terpenoids. The protein is Isoprenyl transferase of Treponema pallidum (strain Nichols).